Here is a 72-residue protein sequence, read N- to C-terminus: ATP synthase subunit c (72 aa).

The next 2 helical transmembrane spans lie at 4-24 and 46-66; these read ALGAGLAVSIAGIGGGIGMGI and LLFITLAFIETLTIYGLLIAF.

Belongs to the ATPase C chain family. F-type ATPases have 2 components, F(1) - the catalytic core - and F(0) - the membrane proton channel. F(1) has five subunits: alpha(3), beta(3), gamma(1), delta(1), epsilon(1). F(0) has three main subunits: a(1), b(2) and c(10-14). The alpha and beta chains form an alternating ring which encloses part of the gamma chain. F(1) is attached to F(0) by a central stalk formed by the gamma and epsilon chains, while a peripheral stalk is formed by the delta and b chains.

The protein localises to the cell membrane. F(1)F(0) ATP synthase produces ATP from ADP in the presence of a proton or sodium gradient. F-type ATPases consist of two structural domains, F(1) containing the extramembraneous catalytic core and F(0) containing the membrane proton channel, linked together by a central stalk and a peripheral stalk. During catalysis, ATP synthesis in the catalytic domain of F(1) is coupled via a rotary mechanism of the central stalk subunits to proton translocation. Functionally, key component of the F(0) channel; it plays a direct role in translocation across the membrane. A homomeric c-ring of between 10-14 subunits forms the central stalk rotor element with the F(1) delta and epsilon subunits. This is ATP synthase subunit c from Syntrophomonas wolfei subsp. wolfei (strain DSM 2245B / Goettingen).